Consider the following 195-residue polypeptide: MRVGTWICLPGRPGRCRKQHDLGNCPEVPGIFKTLALSPGAPDMMQQPRVETDTIGAGEGPQQAVPWSAWVTRHGWVRWWVSHMPPSWIQWWSTSNWRQPLQRLLWGLEGILYLLLALMLCHALFTTGSHLLSSLWPVVAAVWRHLLPALLLLVLSALPALLFTASFLLLFSTLLSLVGLLTSMTHPGDTQDLDQ.

The next 2 membrane-spanning stretches (helical) occupy residues 105 to 125 (LWGL…HALF) and 145 to 171 (HLLP…LLLF).

The protein resides in the membrane. In Homo sapiens (Human), this protein is Transmembrane protein 239 (TMEM239).